A 353-amino-acid polypeptide reads, in one-letter code: MKFALTGGGTGGHLSIAKALAIELEKQGIEAIYLGSTYGQDKEWFENSPLFSERYFFNTQGVVNKSFFKKIGSLFLQAKAAFKAKEILKKHQITHTISVGGFSAGPASFASLLNKIPLYIHEQNAIKGSLNRYLSPKAKAVFSSYAFKDKGNHVLTSYPVQNAFFDFARTRTEIKHILFLGGSQGAKAINEFALLNAPKLTKQGIKITHICGPNSYEQVRFFYQELGLLDKIELFAFHNNITEIMHRADLCVSRAGASSVWELCANGLPTIFIPYPFASNNHQYYNVLEFEKENLCYVVPQNELLPKKLFEVIRKLNQKDDQGNKNLTTISNQLQQKIAKDGAKTIIETILSA.

UDP-N-acetyl-alpha-D-glucosamine contacts are provided by residues 10–12 (TGG), asparagine 124, serine 183, and glutamine 283.

Belongs to the glycosyltransferase 28 family. MurG subfamily.

It is found in the cell inner membrane. The enzyme catalyses di-trans,octa-cis-undecaprenyl diphospho-N-acetyl-alpha-D-muramoyl-L-alanyl-D-glutamyl-meso-2,6-diaminopimeloyl-D-alanyl-D-alanine + UDP-N-acetyl-alpha-D-glucosamine = di-trans,octa-cis-undecaprenyl diphospho-[N-acetyl-alpha-D-glucosaminyl-(1-&gt;4)]-N-acetyl-alpha-D-muramoyl-L-alanyl-D-glutamyl-meso-2,6-diaminopimeloyl-D-alanyl-D-alanine + UDP + H(+). Its pathway is cell wall biogenesis; peptidoglycan biosynthesis. Functionally, cell wall formation. Catalyzes the transfer of a GlcNAc subunit on undecaprenyl-pyrophosphoryl-MurNAc-pentapeptide (lipid intermediate I) to form undecaprenyl-pyrophosphoryl-MurNAc-(pentapeptide)GlcNAc (lipid intermediate II). This chain is UDP-N-acetylglucosamine--N-acetylmuramyl-(pentapeptide) pyrophosphoryl-undecaprenol N-acetylglucosamine transferase, found in Helicobacter pylori (strain ATCC 700392 / 26695) (Campylobacter pylori).